Consider the following 308-residue polypeptide: Maspardin (308 aa).

Residues 87 to 159 (FCDGFRKLLD…NSFWLMPAFM (73 aa)) form the AB hydrolase-1 domain. Ser304 carries the phosphoserine modification.

The protein belongs to the AB hydrolase superfamily. In terms of assembly, interacts with CD4. Interacts with ALDH16A1. Expressed in cell lines FT.1 and in a L cell fibroblast derivative (at protein level).

It localises to the cytoplasm. Functionally, may play a role as a negative regulatory factor in CD4-dependent T-cell activation. This Mus musculus (Mouse) protein is Maspardin (Spg21).